The following is a 229-amino-acid chain: MSQGDSNPAAIPHAAEDIQGDDRWMSQHNRFVLDCKDKEPDVLFVGDSMVQLMQQYEIWRELFSPLHALNFGIGGDTTRHVLWRLKNGELENIKPKVIVVWVGTNNHENTAEEVAGGIEAIVQLINTRQPQAKIIVLGLLPRGEKPNPLRQKNAKVNQLLKVSLPKLANVQLLDTDGGFVHSDGAISCHDMFDFLHLTGGGYAKICKPLHELIMQLLEETPEEKQTTIA.

Serine 2 bears the N-acetylserine mark. Serine 2 bears the Phosphoserine mark. Residue serine 48 is part of the active site. The residue at position 64 (serine 64) is a Phosphoserine. Catalysis depends on residues aspartate 193 and histidine 196. Phosphothreonine is present on threonine 220.

Belongs to the 'GDSL' lipolytic enzyme family. Platelet-activating factor acetylhydrolase IB beta/gamma subunits subfamily. Forms a catalytic dimer which is either homodimer (alpha2/alpha2 homodimer) or heterodimer with PAFAH1B3 (alpha2/alpha1 heterodimer). Component of the cytosolic (PAF-AH (I)) heterotetrameric enzyme, which is composed of PAFAH1B1 (beta), PAFAH1B2 (alpha2) and PAFAH1B3 (alpha1) subunits. The catalytic activity of the enzyme resides in the alpha1 (PAFAH1B3) and alpha2 (PAFAH1B2) subunits, whereas the beta subunit (PAFAH1B1) has regulatory activity. Trimer formation is not essential for the catalytic activity. Interacts (homodimer form) with PAFAH1B1 (homodimer form); PAFAH1B2 competes with NDEL1 for PAFAH1B1 binding. Interacts with VLDLR; this interaction may modulate the Reelin pathway.

It is found in the cytoplasm. It catalyses the reaction a 1-O-alkyl-2-acetyl-sn-glycero-3-phosphocholine + H2O = a 1-O-alkyl-sn-glycero-3-phosphocholine + acetate + H(+). The catalysed reaction is 1-O-hexadecyl-2-acetyl-sn-glycero-3-phosphocholine + H2O = 1-O-hexadecyl-sn-glycero-3-phosphocholine + acetate + H(+). The enzyme catalyses 1-O-hexadecyl-2-acetyl-sn-glycero-3-phosphate + H2O = 1-O-hexadecyl-sn-glycero-3-phosphate + acetate + H(+). It carries out the reaction 1-O-hexadecyl-2-acetyl-sn-glycero-3-phosphoethanolamine + H2O = 1-O-hexadecyl-sn-glycero-3-phosphoethanolamine + acetate + H(+). With respect to regulation, beta subunit (PAFAH1B1) stimulates the acetylhydrolase activity of the alpha2/alpha2 catalytic homodimer. Functionally, alpha2 catalytic subunit of the cytosolic type I platelet-activating factor (PAF) acetylhydrolase (PAF-AH (I)) heterotetrameric enzyme that catalyzes the hydrolyze of the acetyl group at the sn-2 position of PAF and its analogs and modulates the action of PAF. The activity and substrate specificity of PAF-AH (I) are affected by its subunit composition. The alpha2/alpha2 homodimer (PAFAH1B2/PAFAH1B2 homodimer) hydrolyzes PAF and 1-O-alkyl-2-acetyl-sn-glycero-3-phosphorylethanolamine (AAGPE) more efficiently than 1-O-alkyl-2-acetyl-sn-glycero-3-phosphoric acid (AAGPA). In contrast, the alpha1/alpha2 heterodimer(PAFAH1B3/PAFAH1B3 heterodimer) hydrolyzes AAGPA more efficiently than PAF, but has little hydrolytic activity towards AAGPE. May play a role in male germ cell meiosis during the late pachytenestage and meiotic divisions as well as early spermiogenesis. The polypeptide is Platelet-activating factor acetylhydrolase IB subunit alpha2 (Pongo abelii (Sumatran orangutan)).